The chain runs to 138 residues: PilB-specific inhibitory protein CpiA (138 aa).

As to quaternary structure, interacts with PilB but not with TfpB.

Acts as a PilB inhibitor to control natural transformation. Inhibits type IV pili (T4P) extension by specifically binding and inhibiting the pilus extension ATPase PilB but not TfpB. This activity probably modulates T4P extension under different environmental conditions. In Acinetobacter baylyi (strain ATCC 33305 / BD413 / ADP1), this protein is PilB-specific inhibitory protein CpiA.